Reading from the N-terminus, the 149-residue chain is MPVDQEKLAKLHKLSAANKVGGTRRKINKKGNLYNNNDKDNTKLQAELHKLHPMTIENVAEANFFKKNGKVLHFNSAVVQIAPQCNLTMIHGQPKENTLNGLYPSVASQLGSQELEYLTGLAHNLENEQTVLDQLGDRCSETKQQVMNS.

The 66-residue stretch at D38–Y103 folds into the NAC-A/B domain.

It belongs to the NAC-beta family. As to quaternary structure, part of the nascent polypeptide-associated complex (NAC), consisting of EGD2 and either EGD1 or BTT1. NAC associates with ribosomes via EGD1 or BTT1.

The protein resides in the cytoplasm. Its subcellular location is the nucleus. Its function is as follows. Acts as a component of the nascent polypeptide-associated complex (NAC), which promotes mitochondrial protein import by enhancing productive ribosome interactions with the outer mitochondrial membrane. Also blocks the inappropriate interaction of ribosomes translating non-secretory nascent polypeptides with translocation sites in the membrane of the endoplasmic reticulum. BTT1 may act as a transcription factor that exert a negative effect on the expression of several genes that are transcribed by RNA polymerase II. This chain is Nascent polypeptide-associated complex subunit beta-2 (BTT1), found in Saccharomyces cerevisiae (strain ATCC 204508 / S288c) (Baker's yeast).